Here is a 651-residue protein sequence, read N- to C-terminus: Intraflagellar transport protein 70A (651 aa).

7 TPR repeats span residues 8-41 (DGEY…QYRS), 42-75 (RAGL…SPEV), 140-173 (PESE…MGYK), 175-207 (DLSF…GIRE), 372-405 (LTEQ…YDET), 410-443 (IPVL…CNEH), and 445-478 (IWKL…HYDN). The stretch at 494-521 (YIMTSQNEEAEELMRKIEKEEEQIAYEN) forms a coiled coil. Residues 530 to 563 (CIVNLVIGTLYCAKGNYEFGISRVIKSLEPYNKK) form a TPR 8 repeat.

This sequence belongs to the TTC30/dfy-1/fleer family.

The protein localises to the cell projection. It is found in the cilium. Functionally, required for polyglutamylation of axonemal tubulin. Plays a role in anterograde intraflagellar transport (IFT), the process by which cilia precursors are transported from the base of the cilium to the site of their incorporation at the tip. The protein is Intraflagellar transport protein 70A (ift70a) of Xenopus laevis (African clawed frog).